The primary structure comprises 936 residues: Pre-rRNA-processing protein FHL1 (936 aa).

2 disordered regions span residues 1–90 (MDGE…NGNL) and 139–169 (DHSR…QDNT). Residues 9-29 (ESSNHVGTSSPTTETQFTIDS) are compositionally biased toward polar residues. The residue at position 44 (S44) is a Phosphoserine. The segment covering 139–150 (DHSREVSSKEDI) has biased composition (basic and acidic residues). Position 228 is a phosphoserine (S228). 2 positions are modified to phosphothreonine: T230 and T247. The segment covering 243–257 (PPQNTVTENNSTDAE) has biased composition (polar residues). Residues 243–270 (PPQNTVTENNSTDAETTQRKLSEPIDAS) are disordered. S264 bears the Phosphoserine mark. The 58-residue stretch at 300–357 (AIIGRRSENDFSHKVDVNLGPSKSISRRHAQIFYNFGTGRFELSIIGKNGAFVDDIFV) folds into the FHA domain. Residues 384–395 (EQERNDDSKSPE) are compositionally biased toward basic and acidic residues. Residues 384–442 (EQERNDDSKSPENADIAESEINTRNLKKNEPKSKKKITTGAKPKKAQTKPAVKKEKKPP) are disordered. Basic residues predominate over residues 416–430 (SKKKITTGAKPKKAQ). Residues 460 to 552 (TKPTVSYSAM…ERQKKKQSEI (93 aa)) constitute a DNA-binding region (fork-head). Positions 718–936 (AKAQHSKPIR…EVNVSLEEKL (219 aa)) are disordered. 2 stretches are compositionally biased toward polar residues: residues 742–753 (SQLSASASSHPN) and 765–777 (DPSS…QPRQ). Composition is skewed to low complexity over residues 779 to 795 (ARAT…AAAS) and 815 to 853 (ESGT…TSSE). The segment covering 854-863 (SESESDSGSE) has biased composition (acidic residues). The segment covering 864-911 (VDEKNNKNEKIDSESIKNNESKDDIPSKDENSSNDNREISKTDEEGHD) has biased composition (basic and acidic residues).

It localises to the nucleus. In terms of biological role, acts as a transcriptional regulator that recruits coactivator IFH1 to the promoters of ribosomal protein genes. Recruited to ribosomal gene promoters by RAP1. The chain is Pre-rRNA-processing protein FHL1 (FHL1) from Saccharomyces cerevisiae (strain ATCC 204508 / S288c) (Baker's yeast).